A 148-amino-acid chain; its full sequence is Transcription antitermination protein NusB (148 aa).

It belongs to the NusB family.

Involved in transcription antitermination. Required for transcription of ribosomal RNA (rRNA) genes. Binds specifically to the boxA antiterminator sequence of the ribosomal RNA (rrn) operons. The polypeptide is Transcription antitermination protein NusB (Nitrosococcus oceani (strain ATCC 19707 / BCRC 17464 / JCM 30415 / NCIMB 11848 / C-107)).